The primary structure comprises 211 residues: LexA repressor (211 aa).

A DNA-binding region (H-T-H motif) is located at residues R30–K50. Catalysis depends on for autocatalytic cleavage activity residues S128 and K165.

The protein belongs to the peptidase S24 family. Homodimer.

The catalysed reaction is Hydrolysis of Ala-|-Gly bond in repressor LexA.. Functionally, represses a number of genes involved in the response to DNA damage (SOS response), including recA and lexA. In the presence of single-stranded DNA, RecA interacts with LexA causing an autocatalytic cleavage which disrupts the DNA-binding part of LexA, leading to derepression of the SOS regulon and eventually DNA repair. The sequence is that of LexA repressor from Haemophilus ducreyi (strain 35000HP / ATCC 700724).